The following is a 198-amino-acid chain: MICOS complex subunit MIC26 (198 aa).

The first 25 residues, M1–P25, serve as a signal peptide directing secretion. Residues P108–A128 form a helical membrane-spanning segment. The O-linked (Xyl...) (chondroitin sulfate) serine glycan is linked to S162.

This sequence belongs to the apolipoprotein O/MICOS complex subunit Mic27 family. Component of the mitochondrial contact site and cristae organizing system (MICOS) complex, composed of at least MICOS10/MIC10, CHCHD3/MIC19, CHCHD6/MIC25, APOOL/MIC27, IMMT/MIC60, APOO/MIC23/MIC26 and MICOS13/MIC13. This complex was also known under the names MINOS or MitOS complex. he MICOS complex associates with mitochondrial outer membrane proteins SAMM50, MTX1 and MTX2 (together described as components of the mitochondrial outer membrane sorting assembly machinery (SAM) complex) and DNAJC11, mitochondrial inner membrane protein TMEM11 and with HSPA9. The MICOS and SAM complexes together with DNAJC11 are part of a large protein complex spanning both membranes termed the mitochondrial intermembrane space bridging (MIB) complex. Interacts with IMMT/MIC60. Interacts with MICOS10/MIC10 and APOOL/MIC27. Post-translationally, O-glycosylation; glycosaminoglycan of chondroitin-sulfate type. In terms of tissue distribution, expressed in all tissues examined. Up-regulated in diabetic heart.

The protein resides in the mitochondrion inner membrane. The protein localises to the secreted. It is found in the mitochondrion. Its subcellular location is the golgi apparatus membrane. It localises to the endoplasmic reticulum membrane. Component of the MICOS complex, a large protein complex of the mitochondrial inner membrane that plays crucial roles in the maintenance of crista junctions, inner membrane architecture, and formation of contact sites to the outer membrane. Plays a crucial role in crista junction formation and mitochondrial function. Can promote cardiac lipotoxicity by enhancing mitochondrial respiration and fatty acid metabolism in cardiac myoblasts. Promotes cholesterol efflux from macrophage cells. Detected in HDL, LDL and VLDL. Secreted by a microsomal triglyceride transfer protein (MTTP)-dependent mechanism, probably as a VLDL-associated protein that is subsequently transferred to HDL. The chain is MICOS complex subunit MIC26 (APOO) from Homo sapiens (Human).